The primary structure comprises 471 residues: Serine hydroxymethyltransferase 4 (471 aa).

Met-1 is modified (N-acetylmethionine). Residue Ser-39 coordinates L-serine. Pemetrexed is bound by residues Ser-39, Tyr-59, and Glu-61. Residues Glu-61 and Tyr-69 each coordinate L-serine. Pemetrexed is bound by residues 105–107 (SGS), His-134, Ser-190, and His-218. His-218 and Lys-244 together coordinate L-serine. An N6-(pyridoxal phosphate)lysine modification is found at Lys-244. Residue Gly-290 participates in pemetrexed binding. Lys-373 provides a ligand contact to methotrexate. Residue Arg-389 coordinates L-serine. Arg-389 is a binding site for pemetrexed.

The protein belongs to the SHMT family. Homotetramer. Interacts with UBP16. Pyridoxal 5'-phosphate serves as cofactor. In terms of tissue distribution, mostly expressed in flowers, less abundant in roots, inflorescence stems, and siliques, and barely detectable in leaves.

It is found in the cytoplasm. It catalyses the reaction (6R)-5,10-methylene-5,6,7,8-tetrahydrofolate + glycine + H2O = (6S)-5,6,7,8-tetrahydrofolate + L-serine. It participates in one-carbon metabolism; tetrahydrofolate interconversion. Inhibited by the antifolate drugs methotrexate and pemetrexed. Catalyzes the interconversion of serine and glycine with the conversion of tetrahydrofolate (THF) into 5,10-methylene-THF. This Arabidopsis thaliana (Mouse-ear cress) protein is Serine hydroxymethyltransferase 4.